The chain runs to 501 residues: 2-phosphoxylose phosphatase 1 (501 aa).

The Cytoplasmic segment spans residues 1 to 6; it reads MLLRNR. The chain crosses the membrane as a helical; Signal-anchor for type II membrane protein span at residues 7–27; it reads FLLLLALAGLLAFLSLSLQFF. The Lumenal segment spans residues 28–501; the sequence is SRWLPVSLQL…YYDACHQRLF (474 aa). Residue H120 is the Nucleophile of the active site. Residues N328 and N377 are each glycosylated (N-linked (GlcNAc...) asparagine). The active-site Proton donor is D402. N-linked (GlcNAc...) asparagine glycosylation occurs at N488.

It belongs to the histidine acid phosphatase family.

Its subcellular location is the golgi apparatus membrane. The catalysed reaction is 3-O-[beta-D-GlcA-(1-&gt;3)-beta-D-Gal-(1-&gt;3)-beta-D-Gal-(1-&gt;4)-beta-D-2-O-P-Xyl]-L-seryl-[protein] + H2O = 3-O-(beta-D-GlcA-(1-&gt;3)-beta-D-Gal-(1-&gt;3)-beta-D-Gal-(1-&gt;4)-beta-D-Xyl)-L-seryl-[protein] + phosphate. Responsible for the 2-O-dephosphorylation of xylose in the glycosaminoglycan-protein linkage region of proteoglycans thereby regulating the amount of mature glycosaminoglycan (GAG) chains. Sulfated glycosaminoglycans (GAGs), including heparan sulfate and chondroitin sulfate, are synthesized on the so-called common GAG-protein linkage region (GlcUAbeta1-3Galbeta1-3Galbeta1-4Xylbeta1-O-Ser) of core proteins, which is formed by the stepwise addition of monosaccharide residues by the respective specific glycosyltransferases. Xylose 2-O-dephosphorylation during completion of linkage region formation is a prerequisite for the initiation and efficient elongation of the repeating disaccharide region of GAG chains. The protein is 2-phosphoxylose phosphatase 1 of Xenopus tropicalis (Western clawed frog).